The sequence spans 840 residues: Phosphatidylglycerol lysyltransferase (840 aa).

The Cytoplasmic portion of the chain corresponds to 1–8 (MNQEVKNK). The helical transmembrane segment at 9 to 29 (IFSILKITFATALFIFVAITL) threads the bilayer. Topologically, residues 30–52 (YRELSGINFKDTLVEFSKINRMS) are extracellular. The helical transmembrane segment at 53 to 73 (LVLLFIGGGASLVILSMYDVI) threads the bilayer. The Cytoplasmic segment spans residues 74-89 (LSRALKMDISLGKVLR). Residues 90 to 110 (VSYIINALNAIVGFGGFIGAG) form a helical membrane-spanning segment. Topologically, residues 111–128 (VRAMVYKNYTHDKKKLVH) are extracellular. The chain crosses the membrane as a helical span at residues 129–149 (FISLILISMLTGLSLLSLLIV). At 150-161 (FHVFDASLILDK) the chain is on the cytoplasmic side. Residues 162-182 (ITWVRWVLYVVSFFLPLFIIY) traverse the membrane as a helical segment. Over 183–200 (SMVRPPDKNNRFVGLYCT) the chain is Extracellular. Residues 201 to 221 (LVSCVEWLAAAVVLYFCGVIV) form a helical membrane-spanning segment. Residues 222–229 (DAHVSFMS) lie on the Cytoplasmic side of the membrane. The helical transmembrane segment at 230 to 250 (FIAIFIIAALSGLVSFIPGGF) threads the bilayer. Over 251–271 (GAFDLVVLLGFKTLGVPEEKV) the chain is Extracellular. The chain crosses the membrane as a helical span at residues 272 to 292 (LLMLLLYRFAYYFVPVIIALI). Over 293-337 (LSSFEFGTSAKKYIEGSKYFIPAKDVTSFLMSYQKDIIAKIPSLS) the chain is Cytoplasmic. Residues 338 to 358 (LAILVFFTSMIFFVNNLTIVY) traverse the membrane as a helical segment. The Extracellular segment spans residues 359–369 (DALYDGNHLTY). A helical transmembrane segment spans residues 370–390 (YILLAIHTSACLLLLLNVVGI). Over 391–394 (YKQS) the chain is Cytoplasmic. The next 2 helical transmembrane spans lie at 395–415 (RRAI…TFFT) and 416–436 (YASY…IVAF). Topologically, residues 437 to 450 (RRARRLKRPVRMRN) are cytoplasmic. The chain crosses the membrane as a helical span at residues 451-471 (IVAMLLFSLFILYVNHIFIAG). At 472–489 (TLYALDIYTIEMHTSVLR) the chain is on the extracellular side. The chain crosses the membrane as a helical span at residues 490–510 (YYFWLTILIIAIIIGMIAWLF). Topologically, residues 511–840 (DYQFSKVRIS…SKVMRVIRHK (330 aa)) are cytoplasmic.

The protein belongs to the LPG synthase family.

The protein resides in the cell membrane. The catalysed reaction is L-lysyl-tRNA(Lys) + a 1,2-diacyl-sn-glycero-3-phospho-(1'-sn-glycerol) = a 1,2-diacyl-sn-glycero-3-phospho-1'-(3'-O-L-lysyl)-sn-glycerol + tRNA(Lys). Its function is as follows. Catalyzes the transfer of a lysyl group from L-lysyl-tRNA(Lys) to membrane-bound phosphatidylglycerol (PG), which produces lysylphosphatidylglycerol (LPG), a major component of the bacterial membrane with a positive net charge. LPG synthesis contributes to bacterial virulence as it is involved in the resistance mechanism against cationic antimicrobial peptides (CAMP) produces by the host's immune system (defensins, cathelicidins) and by the competing microorganisms (bacteriocins). In fact, the modification of anionic phosphatidylglycerol with positively charged L-lysine results in repulsion of the peptides. The polypeptide is Phosphatidylglycerol lysyltransferase (mprF) (Staphylococcus aureus (strain Mu50 / ATCC 700699)).